Reading from the N-terminus, the 289-residue chain is Phosphatidylserine decarboxylase proenzyme (289 aa).

Active-site charge relay system; for autoendoproteolytic cleavage activity residues include Asp88, His145, and Ser251. Ser251 functions as the Schiff-base intermediate with substrate; via pyruvic acid; for decarboxylase activity in the catalytic mechanism. Ser251 is modified (pyruvic acid (Ser); by autocatalysis).

It belongs to the phosphatidylserine decarboxylase family. PSD-B subfamily. Prokaryotic type I sub-subfamily. Heterodimer of a large membrane-associated beta subunit and a small pyruvoyl-containing alpha subunit. Pyruvate is required as a cofactor. Is synthesized initially as an inactive proenzyme. Formation of the active enzyme involves a self-maturation process in which the active site pyruvoyl group is generated from an internal serine residue via an autocatalytic post-translational modification. Two non-identical subunits are generated from the proenzyme in this reaction, and the pyruvate is formed at the N-terminus of the alpha chain, which is derived from the carboxyl end of the proenzyme. The autoendoproteolytic cleavage occurs by a canonical serine protease mechanism, in which the side chain hydroxyl group of the serine supplies its oxygen atom to form the C-terminus of the beta chain, while the remainder of the serine residue undergoes an oxidative deamination to produce ammonia and the pyruvoyl prosthetic group on the alpha chain. During this reaction, the Ser that is part of the protease active site of the proenzyme becomes the pyruvoyl prosthetic group, which constitutes an essential element of the active site of the mature decarboxylase.

It is found in the cell membrane. The enzyme catalyses a 1,2-diacyl-sn-glycero-3-phospho-L-serine + H(+) = a 1,2-diacyl-sn-glycero-3-phosphoethanolamine + CO2. It functions in the pathway phospholipid metabolism; phosphatidylethanolamine biosynthesis; phosphatidylethanolamine from CDP-diacylglycerol: step 2/2. Functionally, catalyzes the formation of phosphatidylethanolamine (PtdEtn) from phosphatidylserine (PtdSer). The polypeptide is Phosphatidylserine decarboxylase proenzyme (Polaromonas naphthalenivorans (strain CJ2)).